We begin with the raw amino-acid sequence, 208 residues long: Sodium/potassium-transporting ATPase subunit beta-1-interacting protein 4 (208 aa).

Transmembrane regions (helical) follow at residues alanine 35 to isoleucine 55, valine 62 to phenylalanine 82, and cysteine 151 to phenylalanine 171.

This sequence belongs to the NKAIN family. Interacts with ATP1B1.

It is found in the cell membrane. This is Sodium/potassium-transporting ATPase subunit beta-1-interacting protein 4 (NKAIN4) from Homo sapiens (Human).